Reading from the N-terminus, the 454-residue chain is Cholesterol 7-desaturase nvd (454 aa).

Transmembrane regions (helical) follow at residues 13-33 (VLCP…LGAG) and 47-67 (TTLS…LWGW). In terms of domain architecture, Rieske spans 117 to 221 (WYRALDSHLL…SCELNGMVFV (105 aa)). [2Fe-2S] cluster-binding residues include C158, H160, C178, and H181.

This sequence belongs to the cholesterol 7-desaturase family. [2Fe-2S] cluster is required as a cofactor.

Its subcellular location is the membrane. It catalyses the reaction cholesterol + NADPH + O2 + H(+) = 7-dehydrocholesterol + NADP(+) + 2 H2O. It carries out the reaction cholesterol + NADH + O2 + H(+) = 7-dehydrocholesterol + NAD(+) + 2 H2O. It functions in the pathway steroid hormone biosynthesis; dafachronic acid biosynthesis. Catalyzes the production of 7-dehydrocholesterol (7-DHC or cholesta-5,7-dien-3beta-ol) by inserting a double bond (desaturating) at the C7-C8 single bond of cholesterol. This reaction is the first step in the synthesis of the steroid hormone Delta(7)-dafachronic acid. The polypeptide is Cholesterol 7-desaturase nvd (nvd) (Xenopus laevis (African clawed frog)).